Reading from the N-terminus, the 304-residue chain is Dermonecrotic toxin LiSicTox-betaIA1i (304 aa).

Residues 1-21 (MLLPAVISFIVYAVFLQEANG) form the signal peptide. A propeptide spanning residues 22-26 (HAAER) is cleaved from the precursor. The active site involves His-38. Positions 58 and 60 each coordinate Mg(2+). His-74 (nucleophile) is an active-site residue. 2 cysteine pairs are disulfide-bonded: Cys-78/Cys-84 and Cys-80/Cys-223. A Mg(2+)-binding site is contributed by Asp-118.

It belongs to the arthropod phospholipase D family. Class II subfamily. Class IIb sub-subfamily. Mg(2+) is required as a cofactor. As to expression, expressed by the venom gland.

The protein localises to the secreted. It carries out the reaction an N-(acyl)-sphingosylphosphocholine = an N-(acyl)-sphingosyl-1,3-cyclic phosphate + choline. It catalyses the reaction an N-(acyl)-sphingosylphosphoethanolamine = an N-(acyl)-sphingosyl-1,3-cyclic phosphate + ethanolamine. The enzyme catalyses a 1-acyl-sn-glycero-3-phosphocholine = a 1-acyl-sn-glycero-2,3-cyclic phosphate + choline. The catalysed reaction is a 1-acyl-sn-glycero-3-phosphoethanolamine = a 1-acyl-sn-glycero-2,3-cyclic phosphate + ethanolamine. Its function is as follows. Dermonecrotic toxins cleave the phosphodiester linkage between the phosphate and headgroup of certain phospholipids (sphingolipid and lysolipid substrates), forming an alcohol (often choline) and a cyclic phosphate. This toxin acts on sphingomyelin (SM) with low activity. It may also act on ceramide phosphoethanolamine (CPE), lysophosphatidylcholine (LPC) and lysophosphatidylethanolamine (LPE), but not on lysophosphatidylserine (LPS), and lysophosphatidylglycerol (LPG). It acts by transphosphatidylation, releasing exclusively cyclic phosphate products as second products. Induces inflammatory response but no or very weak hemolysis, dermonecrosis, vascular permeability, edema, and cytotoxicity against renal epithelial cells. Causes swelling and erythema. In vivo, is not lethal to mice when intraperitoneally injected. This Loxosceles intermedia (Brown spider) protein is Dermonecrotic toxin LiSicTox-betaIA1i.